The chain runs to 900 residues: Phosphoenolpyruvate carboxylase (900 aa).

Residues His-140 and Lys-568 contribute to the active site.

This sequence belongs to the PEPCase type 1 family. Mg(2+) is required as a cofactor.

It carries out the reaction oxaloacetate + phosphate = phosphoenolpyruvate + hydrogencarbonate. Its function is as follows. Forms oxaloacetate, a four-carbon dicarboxylic acid source for the tricarboxylic acid cycle. The polypeptide is Phosphoenolpyruvate carboxylase (Neisseria meningitidis serogroup C / serotype 2a (strain ATCC 700532 / DSM 15464 / FAM18)).